The sequence spans 595 residues: Aspartate--tRNA(Asp/Asn) ligase (595 aa).

Residue Glu-175 participates in L-aspartate binding. Positions 199–202 (QQFK) are aspartate. L-aspartate is bound by residues Arg-221 and His-451. 221 to 223 (RDE) is an ATP binding site. Glu-485 contributes to the ATP binding site. Arg-492 contacts L-aspartate. 537–540 (GVDR) contributes to the ATP binding site.

Belongs to the class-II aminoacyl-tRNA synthetase family. Type 1 subfamily. Homodimer.

It is found in the cytoplasm. The catalysed reaction is tRNA(Asx) + L-aspartate + ATP = L-aspartyl-tRNA(Asx) + AMP + diphosphate. In terms of biological role, aspartyl-tRNA synthetase with relaxed tRNA specificity since it is able to aspartylate not only its cognate tRNA(Asp) but also tRNA(Asn). Reaction proceeds in two steps: L-aspartate is first activated by ATP to form Asp-AMP and then transferred to the acceptor end of tRNA(Asp/Asn). This is Aspartate--tRNA(Asp/Asn) ligase from Acidiphilium cryptum (strain JF-5).